We begin with the raw amino-acid sequence, 409 residues long: Palmitoyltransferase ZDHHC23 (409 aa).

At 1–87 (MTQKGSMKPV…RIPWLRGAKK (87 aa)) the chain is on the cytoplasmic side. Residues 88–106 (VNISIIPPLVLLPVFLHVA) form a helical membrane-spanning segment. Residues 107–109 (SWH) lie on the Lumenal side of the membrane. A helical membrane pass occupies residues 110 to 132 (FLLGVVVLTSLPVLALWYYYLTH). Residues 133–136 (RRKE) lie on the Cytoplasmic side of the membrane. A helical transmembrane segment spans residues 137–157 (QTLFFLSLGLFSLGYMYYVFL). The Lumenal portion of the chain corresponds to 158–165 (QEVVPKGR). The helical transmembrane segment at 166 to 186 (VGPVQLAVLTCGLFLILLALH) threads the bilayer. Topologically, residues 187–302 (RAKKNPGYLS…NSCVGESNHQ (116 aa)) are cytoplasmic. Positions 215–255 (RKGQEKTKGFPGADMSGSLNNRTTKDDPKGSSKMPAGSPTK) are disordered. The DHHC domain maps to 259–309 (DWCAKCQLVRPARAWHCRICGICVRRMDHHCVWINSCVGESNHQAFILALL). The active-site S-palmitoyl cysteine intermediate is C289. Residues 303-323 (AFILALLIFLLTSVYGITLTL) form a helical membrane-spanning segment. Topologically, residues 324 to 331 (DTICRDRS) are lumenal. A helical membrane pass occupies residues 332-352 (VFTALFYCPGVYANYSSALSF). Position 353 (T353) is a topological domain, cytoplasmic. The helical transmembrane segment at 354 to 374 (CVWYSVIITAGMAYIFLIQLI) threads the bilayer. Residues 375 to 409 (NISYNVTEREVQQALRQKTGRRLLCGLIVDTGLLG) lie on the Lumenal side of the membrane.

Belongs to the DHHC palmitoyltransferase family. Interacts with NOS1.

It localises to the golgi apparatus membrane. Its subcellular location is the golgi apparatus. The protein resides in the trans-Golgi network membrane. It catalyses the reaction L-cysteinyl-[protein] + hexadecanoyl-CoA = S-hexadecanoyl-L-cysteinyl-[protein] + CoA. Its function is as follows. Palmitoyltransferase that could catalyze the addition of palmitate onto various protein substrates and be involved in a variety of cellular processes. Palmitoyltransferase that mediates palmitoylation of KCNMA1, regulating localization of KCNMA1 to the plasma membrane. May be involved in NOS1 regulation and targeting to the synaptic membrane. The chain is Palmitoyltransferase ZDHHC23 from Homo sapiens (Human).